The chain runs to 537 residues: [Pyruvate dehydrogenase [acetyl-transferring]]-phosphatase 1, mitochondrial (537 aa).

A mitochondrion-targeting transit peptide spans 1-71; it reads MPAPTQLFFP…WWQYTQGRRY (71 aa). Residues 109–525 form the PPM-type phosphatase domain; sequence ILGFDSNQLP…DDITIIVVQF (417 aa). Mn(2+) is bound by residues D144 and G145. An N6-acetyllysine modification is found at K202. Mn(2+)-binding residues include D418 and D516.

It belongs to the PP2C family. As to quaternary structure, heterodimer of a catalytic (PDP1) and a regulatory (PDPR) subunit. Mn(2+) serves as cofactor. The cofactor is Mg(2+).

It is found in the mitochondrion. It carries out the reaction O-phospho-L-seryl-[pyruvate dehydrogenase E1 alpha subunit] + H2O = L-seryl-[pyruvate dehydrogenase E1 alpha subunit] + phosphate. With respect to regulation, magnesium-dependent and calcium-stimulated. PDP1 activity strongly depends on its Ca(2+)-dependent binding to the lipoyl domain of E2 subunit of component of the pyruvate dehydrogenase complex. Mitochondrial enzyme that catalyzes the dephosphorylation and concomitant reactivation of the alpha subunit of the E1 component of the pyruvate dehydrogenase complex (PDC), thereby stimulating the conversion of pyruvate into acetyl-CoA. The chain is [Pyruvate dehydrogenase [acetyl-transferring]]-phosphatase 1, mitochondrial from Homo sapiens (Human).